The chain runs to 249 residues: Exosome complex component Rrp41 (249 aa).

The protein belongs to the RNase PH family. Rrp41 subfamily. As to quaternary structure, component of the archaeal exosome complex. Forms a hexameric ring-like arrangement composed of 3 Rrp41-Rrp42 heterodimers. The hexameric ring associates with a trimer of Rrp4 and/or Csl4 subunits.

The protein localises to the cytoplasm. Functionally, catalytic component of the exosome, which is a complex involved in RNA degradation. Has 3'-&gt;5' exoribonuclease activity. Can also synthesize heteromeric RNA-tails. This Thermococcus gammatolerans (strain DSM 15229 / JCM 11827 / EJ3) protein is Exosome complex component Rrp41.